We begin with the raw amino-acid sequence, 159 residues long: Thioredoxin O2, mitochondrial (159 aa).

Ser-40 carries the post-translational modification Phosphoserine. The Thioredoxin domain maps to 43–159 (FAEGDRSSFV…LKSVMEQLYK (117 aa)). Residues Cys-83 and Cys-86 each act as nucleophile in the active site. A disulfide bridge links Cys-83 with Cys-86.

This sequence belongs to the thioredoxin family. Plant O-type subfamily.

It localises to the mitochondrion. Its function is as follows. Thiol-disulfide oxidoreductase that may participate in various redox reactions. Possesses insulin disulfide bonds reducing activity. Reduced by thioredoxin reductases NTRA and NTRB. This Arabidopsis thaliana (Mouse-ear cress) protein is Thioredoxin O2, mitochondrial.